A 397-amino-acid chain; its full sequence is Phosphoglycerate kinase (397 aa).

Substrate is bound by residues 25–27 (DLN), Arg41, 64–67 (HLGR), Arg118, and Arg151. ATP contacts are provided by residues Lys202, Glu324, and 350 to 353 (GGDT).

The protein belongs to the phosphoglycerate kinase family. In terms of assembly, monomer.

It localises to the cytoplasm. The catalysed reaction is (2R)-3-phosphoglycerate + ATP = (2R)-3-phospho-glyceroyl phosphate + ADP. It functions in the pathway carbohydrate degradation; glycolysis; pyruvate from D-glyceraldehyde 3-phosphate: step 2/5. The polypeptide is Phosphoglycerate kinase (Janthinobacterium sp. (strain Marseille) (Minibacterium massiliensis)).